A 244-amino-acid chain; its full sequence is tRNA (guanine-N(7)-)-methyltransferase (244 aa).

A compositionally biased stretch (pro residues) spans 1 to 11; that stretch reads MTDTHVPPPEL. A disordered region spans residues 1–23; it reads MTDTHVPPPELPAAEEGEERPHR. Glutamate 74, glutamate 99, aspartate 126, and aspartate 149 together coordinate S-adenosyl-L-methionine. Residue aspartate 149 is part of the active site. Residues lysine 153, aspartate 185, and 222–225 contribute to the substrate site; that span reads TKFE.

It belongs to the class I-like SAM-binding methyltransferase superfamily. TrmB family.

The enzyme catalyses guanosine(46) in tRNA + S-adenosyl-L-methionine = N(7)-methylguanosine(46) in tRNA + S-adenosyl-L-homocysteine. Its pathway is tRNA modification; N(7)-methylguanine-tRNA biosynthesis. Functionally, catalyzes the formation of N(7)-methylguanine at position 46 (m7G46) in tRNA. This chain is tRNA (guanine-N(7)-)-methyltransferase, found in Pseudomonas syringae pv. tomato (strain ATCC BAA-871 / DC3000).